We begin with the raw amino-acid sequence, 331 residues long: Mitochondrial carrier protein CoAc1 (331 aa).

Transmembrane regions (helical) follow at residues 16–36, 79–99, 123–143, 193–213, 231–251, and 292–312; these read LVDT…AGAI, FYKG…LHYM, LVAG…LDLA, GIGP…YIYE, LPCG…LDVV, and FAGL…GFTV. Solcar repeat units lie at residues 21–107, 117–218, and 225–319; these read PVLA…YRDW, SGPI…LKRH, and NSVR…MKSW.

The protein belongs to the mitochondrial carrier (TC 2.A.29) family. In terms of tissue distribution, expressed throughout the plant.

The protein resides in the mitochondrion inner membrane. In terms of biological role, required for the accumulation of coenzyme A in the mitochondrial matrix. The sequence is that of Mitochondrial carrier protein CoAc1 from Arabidopsis thaliana (Mouse-ear cress).